A 172-amino-acid chain; its full sequence is Capsid protein (172 aa).

The interval 1–26 is disordered; the sequence is MASKWNWSGTKGRRTPRRPYGRPYKS. Over residues 11-20 the composition is skewed to basic residues; sequence KGRRTPRRPY.

It belongs to the nanoviridae capsid protein family.

It is found in the virion. This is Capsid protein (DNA-S) from Faba bean necrotic yellows virus (isolate Egyptian EV1-93) (FBNYV).